The chain runs to 148 residues: Extracellular globin-2B (148 aa).

A Globin domain is found at 3–148 (CCSAADRHEV…IADVIKAELP (146 aa)). Cysteines 4 and 135 form a disulfide. His98 provides a ligand contact to heme b.

The protein belongs to the globin family. Disulfide bonded trimer of chains IIA, IIB, and IIC.

The protein resides in the secreted. In Tylorrhynchus heterochetus (Japanese palolo worm), this protein is Extracellular globin-2B.